The following is a 46-amino-acid chain: Sperm protamine P1 (46 aa).

This sequence belongs to the protamine P1 family. Testis.

The protein resides in the nucleus. The protein localises to the chromosome. In terms of biological role, protamines substitute for histones in the chromatin of sperm during the haploid phase of spermatogenesis. They compact sperm DNA into a highly condensed, stable and inactive complex. The protein is Sperm protamine P1 (PRM1) of Glauconycteris beatrix (Beatrix's bat).